A 291-amino-acid chain; its full sequence is Small ribosomal subunit biogenesis GTPase RsgA (291 aa).

Residues 63–221 (KNELKRPPVS…IADTPGFSAL (159 aa)) form the CP-type G domain. GTP-binding positions include 112 to 115 (TKKD) and 164 to 172 (GQSGVGKST). The Zn(2+) site is built by Cys-245, Cys-250, His-252, and Cys-258.

The protein belongs to the TRAFAC class YlqF/YawG GTPase family. RsgA subfamily. As to quaternary structure, monomer. Associates with 30S ribosomal subunit, binds 16S rRNA. Zn(2+) serves as cofactor.

It is found in the cytoplasm. One of several proteins that assist in the late maturation steps of the functional core of the 30S ribosomal subunit. Helps release RbfA from mature subunits. May play a role in the assembly of ribosomal proteins into the subunit. Circularly permuted GTPase that catalyzes slow GTP hydrolysis, GTPase activity is stimulated by the 30S ribosomal subunit. This is Small ribosomal subunit biogenesis GTPase RsgA from Staphylococcus aureus (strain Mu50 / ATCC 700699).